A 381-amino-acid chain; its full sequence is Queuine tRNA-ribosyltransferase (381 aa).

D96 serves as the catalytic Proton acceptor. Residues 96–100 (DSGGF), D150, Q193, and G220 contribute to the substrate site. Positions 251–257 (GVGAPDS) are RNA binding. Residue D270 is the Nucleophile of the active site. An RNA binding; important for wobble base 34 recognition region spans residues 275 to 279 (TRIAR). Positions 308, 310, 313, and 339 each coordinate Zn(2+).

Belongs to the queuine tRNA-ribosyltransferase family. In terms of assembly, homodimer. Within each dimer, one monomer is responsible for RNA recognition and catalysis, while the other monomer binds to the replacement base PreQ1. Requires Zn(2+) as cofactor.

It catalyses the reaction 7-aminomethyl-7-carbaguanine + guanosine(34) in tRNA = 7-aminomethyl-7-carbaguanosine(34) in tRNA + guanine. The protein operates within tRNA modification; tRNA-queuosine biosynthesis. Functionally, catalyzes the base-exchange of a guanine (G) residue with the queuine precursor 7-aminomethyl-7-deazaguanine (PreQ1) at position 34 (anticodon wobble position) in tRNAs with GU(N) anticodons (tRNA-Asp, -Asn, -His and -Tyr). Catalysis occurs through a double-displacement mechanism. The nucleophile active site attacks the C1' of nucleotide 34 to detach the guanine base from the RNA, forming a covalent enzyme-RNA intermediate. The proton acceptor active site deprotonates the incoming PreQ1, allowing a nucleophilic attack on the C1' of the ribose to form the product. After dissociation, two additional enzymatic reactions on the tRNA convert PreQ1 to queuine (Q), resulting in the hypermodified nucleoside queuosine (7-(((4,5-cis-dihydroxy-2-cyclopenten-1-yl)amino)methyl)-7-deazaguanosine). The sequence is that of Queuine tRNA-ribosyltransferase from Enterococcus faecalis (strain ATCC 700802 / V583).